The following is a 340-amino-acid chain: Glycerol-3-phosphate dehydrogenase [NAD(P)+] (340 aa).

Ser-11, Trp-12, Arg-33, and Lys-106 together coordinate NADPH. Positions 106, 137, and 139 each coordinate sn-glycerol 3-phosphate. An NADPH-binding site is contributed by Ala-141. 5 residues coordinate sn-glycerol 3-phosphate: Lys-192, Asp-245, Ser-255, Arg-256, and Asn-257. The active-site Proton acceptor is the Lys-192. Arg-256 serves as a coordination point for NADPH. NADPH contacts are provided by Val-280 and Glu-282.

It belongs to the NAD-dependent glycerol-3-phosphate dehydrogenase family.

The protein resides in the cytoplasm. It carries out the reaction sn-glycerol 3-phosphate + NAD(+) = dihydroxyacetone phosphate + NADH + H(+). It catalyses the reaction sn-glycerol 3-phosphate + NADP(+) = dihydroxyacetone phosphate + NADPH + H(+). It functions in the pathway membrane lipid metabolism; glycerophospholipid metabolism. In terms of biological role, catalyzes the reduction of the glycolytic intermediate dihydroxyacetone phosphate (DHAP) to sn-glycerol 3-phosphate (G3P), the key precursor for phospholipid synthesis. This is Glycerol-3-phosphate dehydrogenase [NAD(P)+] from Bacillus cereus (strain G9842).